Reading from the N-terminus, the 451-residue chain is Glutamyl-tRNA reductase (451 aa).

Substrate-binding positions include 47–50, Ser132, 137–139, and Gln143; these read TCNR and EPQ. Cys48 functions as the Nucleophile in the catalytic mechanism. 212-217 contributes to the NADP(+) binding site; it reads AAGEMN.

The protein belongs to the glutamyl-tRNA reductase family. Homodimer.

The catalysed reaction is (S)-4-amino-5-oxopentanoate + tRNA(Glu) + NADP(+) = L-glutamyl-tRNA(Glu) + NADPH + H(+). Its pathway is porphyrin-containing compound metabolism; protoporphyrin-IX biosynthesis; 5-aminolevulinate from L-glutamyl-tRNA(Glu): step 1/2. In terms of biological role, catalyzes the NADPH-dependent reduction of glutamyl-tRNA(Glu) to glutamate 1-semialdehyde (GSA). This is Glutamyl-tRNA reductase from Psychrobacter sp. (strain PRwf-1).